The following is a 294-amino-acid chain: Probable endonuclease 4 (294 aa).

The Zn(2+) site is built by His71, His111, Glu148, Asp182, His185, His217, Asp230, His232, and Glu262.

It belongs to the AP endonuclease 2 family. Requires Zn(2+) as cofactor.

The catalysed reaction is Endonucleolytic cleavage to 5'-phosphooligonucleotide end-products.. Its function is as follows. Endonuclease IV plays a role in DNA repair. It cleaves phosphodiester bonds at apurinic or apyrimidinic (AP) sites, generating a 3'-hydroxyl group and a 5'-terminal sugar phosphate. The protein is Probable endonuclease 4 of Acholeplasma laidlawii (strain PG-8A).